The primary structure comprises 379 residues: MTITVNTNVSAMTAQRYLNKATGELNTSMERLSSGNKINSAKDDAAGLQISNRLTAQSRGLDVAMRNANDGISIAQTAEGAMNESTSILQRMRDLALQSANGTNSASERQALDEESTALQDELNRIAETTSFGGRKLLNGSFGEASFQIGASSGEAIIMGLTSIRADDFRMGGQSFLAEQGKDKDWGVPAGARDLKFEFTTQAGELVTLDVLAKDGDDIEELATYINGQTDKLKASVDQDGKLQIFAAEPNLQGDLAISGGLATELGLNGGPGVKTTVQDIDITSVGGSQNAVGVLDAALRYVDSQRAELGAKQNRLSHSINNLANIQENVEASNSRIKDTDFAKETTQMTKAQILQQAGTSILAQAKQLPNSAMSLLQ.

Coiled coils occupy residues Thr103 to Glu128 and Tyr302 to Thr341.

This sequence belongs to the bacterial flagellin family. In terms of assembly, heteromer of multiple flagellin subunits including FlaA, FlaB, FlaC, FlaD and possibly FlaE.

It is found in the secreted. The protein localises to the bacterial flagellum. In terms of biological role, flagellin is the subunit protein which polymerizes to form the filaments of bacterial flagella. FlaA is essential for flagellar synthesis and full motility. Important for virulence at two different levels: is needed for crossing the fish integument and may play a role once the bacterium has entered the host. This is Flagellin A (flaA) from Vibrio anguillarum (Listonella anguillarum).